A 265-amino-acid polypeptide reads, in one-letter code: Phosphatidylglycerol--prolipoprotein diacylglyceryl transferase (265 aa).

The next 7 helical transmembrane spans lie at 17–37, 59–79, 94–114, 123–143, 177–197, 204–224, and 238–258; these read LAIRWYGLMYLAAFAQFIWLA, MLFYGVLGVIIGGRLGEVLFY, VWKGGMSFHGGFLGVLLAMSI, VLDVWDFIAPMVPLGYAFGRL, SPLYQALVDGLLMFILLWLFA, MAVGGMFALLYGSARFFTEYF, and ISAGQMLSVPLIVLGIVMLLI. Arg-142 contributes to the a 1,2-diacyl-sn-glycero-3-phospho-(1'-sn-glycerol) binding site.

This sequence belongs to the Lgt family.

It localises to the cell inner membrane. The enzyme catalyses L-cysteinyl-[prolipoprotein] + a 1,2-diacyl-sn-glycero-3-phospho-(1'-sn-glycerol) = an S-1,2-diacyl-sn-glyceryl-L-cysteinyl-[prolipoprotein] + sn-glycerol 1-phosphate + H(+). It participates in protein modification; lipoprotein biosynthesis (diacylglyceryl transfer). In terms of biological role, catalyzes the transfer of the diacylglyceryl group from phosphatidylglycerol to the sulfhydryl group of the N-terminal cysteine of a prolipoprotein, the first step in the formation of mature lipoproteins. The sequence is that of Phosphatidylglycerol--prolipoprotein diacylglyceryl transferase from Janthinobacterium sp. (strain Marseille) (Minibacterium massiliensis).